The primary structure comprises 243 residues: Vesicle-associated membrane protein-associated protein B/C (243 aa).

Ala-2 carries the N-acetylalanine modification. The Cytoplasmic portion of the chain corresponds to 2–222 (AKVEQVLSLE…PTGKEEGLST (221 aa)). An MSP domain is found at 7–124 (VLSLEPQHEL…MDSKLRCVFE (118 aa)). Ser-146 carries the post-translational modification Phosphoserine. Lys-147 is covalently cross-linked (Glycyl lysine isopeptide (Lys-Gly) (interchain with G-Cter in SUMO1)). Thr-150 carries the phosphothreonine modification. Residues Ser-156, Ser-158, Ser-159, Ser-160, and Ser-206 each carry the phosphoserine modification. Residues 159–196 (SSLDDTEVKKVMEECKRLQGEVQRLREENKQFKEEDGL) adopt a coiled-coil conformation. The chain crosses the membrane as a helical; Anchor for type IV membrane protein span at residues 223–243 (RLLALVVLFFIVGVIIGKIAL).

The protein belongs to the VAMP-associated protein (VAP) (TC 9.B.17) family. As to quaternary structure, homodimer, and heterodimer with VAPA. Interacts with VAMP1 and VAMP2. Interacts (via MSP domain) with ZFYVE27. Interacts with RMDN3. Interacts with KIF5A in a ZFYVE27-dependent manner. Interacts (via MSP domain) with STARD3 (via phospho-FFAT motif). Interacts with STARD3NL (via FFAT motif). Interacts with CERT1. Interacts with PLEKHA3 and SACM1L to form a ternary complex. Interacts with VPS13A (via FFAT motif). Interacts with RB1CC1 (via phosphorylated FFAT motif), MIGA2 (via phosphorylated FFAT motif), RMDN3 (via phosphorylated FFAT motif), OSBPL1A (via FFAT motif), KCNB1 (via phosphorylated FFAT motif) and KCNB2 (via phosphorylated FFAT motif). Interacts (via MSP domain) with WDR44 (via FFAT motif); the interactions connect the endoplasmic reticulum (ER) with the endosomal tubule. (Microbial infection) Interacts (via MSP domain) with hepatitis C virus (HCV) non-structural protein 5A (via disordered domain D3). Interacts with HCV RNA-directed RNA polymerase. In terms of tissue distribution, ubiquitous. Isoform 1 predominates.

Its subcellular location is the endoplasmic reticulum membrane. Functionally, endoplasmic reticulum (ER)-anchored protein that mediates the formation of contact sites between the ER and endosomes via interaction with FFAT motif-containing proteins such as STARD3 or WDR44. Interacts with STARD3 in a FFAT motif phosphorylation dependent manner. Via interaction with WDR44 participates in neosynthesized protein export. Participates in the endoplasmic reticulum unfolded protein response (UPR) by inducing ERN1/IRE1 activity. Involved in cellular calcium homeostasis regulation. This Homo sapiens (Human) protein is Vesicle-associated membrane protein-associated protein B/C.